The chain runs to 143 residues: Putative phosphotransferase IIA component SgcA (143 aa).

A PTS EIIA type-2 domain is found at 1 to 143; that stretch reads MINDIKWVQA…DDALFALVSG (143 aa). His63 serves as the catalytic Tele-phosphohistidine intermediate.

It is found in the cytoplasm. Its function is as follows. The phosphoenolpyruvate-dependent sugar phosphotransferase system (sugar PTS), a major carbohydrate active -transport system, catalyzes the phosphorylation of incoming sugar substrates concomitantly with their translocation across the cell membrane. This is Putative phosphotransferase IIA component SgcA (sgcA) from Escherichia coli (strain K12).